We begin with the raw amino-acid sequence, 288 residues long: Protein sprouty homolog 3 (288 aa).

An SPR domain is found at 154 to 267 (KCVPCTAVRP…PGCRCKRHTN (114 aa)).

Belongs to the sprouty family. As to quaternary structure, interacts with TESK1. Interacts with USP11. Interacts with CAV1 (via C-terminus). As to expression, expressed in the brain with expression the highest in Purkinje cell bodies and projections in the cerebellum (at protein level). Also expressed in central and peripheral nervous system ganglion cells, superior cervical ganglion and dorsal root ganglion (at protein level). Expressed in the retinal ganglion cell layer and the inner nuclear layer (at protein level).

It localises to the cytoplasm. Functionally, inhibits neurite branching, arbor length and neurite complexity. Inhibits EGF-mediated p42/44 ERK signaling. Negatively regulates the MAPK cascade, resulting in a reduction of extracellular matrix protein accumulation. May function as an antagonist of fibroblast growth factor (FGF) pathways and may negatively modulate respiratory organogenesis. This Mus musculus (Mouse) protein is Protein sprouty homolog 3.